The primary structure comprises 167 residues: Small ribosomal subunit protein uS5 (167 aa).

One can recognise an S5 DRBM domain in the interval 11 to 74; it reads LQEKLIAVNR…DKARRNMTTI (64 aa).

It belongs to the universal ribosomal protein uS5 family. In terms of assembly, part of the 30S ribosomal subunit. Contacts proteins S4 and S8.

Functionally, with S4 and S12 plays an important role in translational accuracy. Its function is as follows. Located at the back of the 30S subunit body where it stabilizes the conformation of the head with respect to the body. The sequence is that of Small ribosomal subunit protein uS5 from Baumannia cicadellinicola subsp. Homalodisca coagulata.